Consider the following 433-residue polypeptide: Serine/threonine-protein kinase Sgk1 (433 aa).

Positions 66–92 (QDVELMNSNPSPPPSPSQQINLGPSSN) are disordered. The span at 83 to 92 (QQINLGPSSN) shows a compositional bias: polar residues. Residues 100 to 357 (FDFLKVIGKG…FTEIKNHMFF (258 aa)) enclose the Protein kinase domain. ATP contacts are provided by residues 106–114 (IGKGSFGKV) and K129. D224 functions as the Proton acceptor in the catalytic mechanism. The 76-residue stretch at 358–433 (SPINWDDLNA…SYAPAMDSYL (76 aa)) folds into the AGC-kinase C-terminal domain.

It belongs to the protein kinase superfamily. AGC Ser/Thr protein kinase family.

The protein resides in the cytoplasm. It is found in the nucleus. The protein localises to the endoplasmic reticulum. It catalyses the reaction L-seryl-[protein] + ATP = O-phospho-L-seryl-[protein] + ADP + H(+). The catalysed reaction is L-threonyl-[protein] + ATP = O-phospho-L-threonyl-[protein] + ADP + H(+). Functionally, protein kinase that may play an important role in cellular stress response. May be involved in the regulation of processes such as cell survival, neuronal excitability and renal sodium excretion. This is Serine/threonine-protein kinase Sgk1 (sgk1) from Danio rerio (Zebrafish).